The chain runs to 184 residues: Large ribosomal subunit protein uL6 (184 aa).

This sequence belongs to the universal ribosomal protein uL6 family. As to quaternary structure, part of the 50S ribosomal subunit.

This protein binds to the 23S rRNA, and is important in its secondary structure. It is located near the subunit interface in the base of the L7/L12 stalk, and near the tRNA binding site of the peptidyltransferase center. This chain is Large ribosomal subunit protein uL6, found in Thermosipho africanus (strain TCF52B).